Reading from the N-terminus, the 348-residue chain is Protein RecA (348 aa).

G65–T72 contributes to the ATP binding site.

This sequence belongs to the RecA family.

The protein resides in the cytoplasm. Can catalyze the hydrolysis of ATP in the presence of single-stranded DNA, the ATP-dependent uptake of single-stranded DNA by duplex DNA, and the ATP-dependent hybridization of homologous single-stranded DNAs. It interacts with LexA causing its activation and leading to its autocatalytic cleavage. The chain is Protein RecA from Vibrio natriegens.